The chain runs to 143 residues: Pathogenesis-related protein P2 (143 aa).

The N-terminal stretch at 1–23 is a signal peptide; sequence MERVNKLCVAFFVINMMMAVAAA. The Barwin domain maps to 24–143; that stretch reads QSATNVRATY…LNVNYEFVNC (120 aa). Intrachain disulfides connect C52-C84, C73-C107, and C87-C143.

It is found in the secreted. It localises to the cell wall. The polypeptide is Pathogenesis-related protein P2 (Solanum lycopersicum (Tomato)).